Here is a 1829-residue protein sequence, read N- to C-terminus: Protein let-418 (1829 aa).

Composition is skewed to acidic residues over residues 1–17 (MSTE…ESME) and 25–39 (ATEE…EQGD). Disordered stretches follow at residues 1–81 (MSTE…YNST) and 147–198 (MAAQ…SDQE). Basic residues predominate over residues 48 to 63 (RSSRKKGGKGGKKGSK). 2 consecutive PHD-type zinc fingers follow at residues 256-303 (NDYC…CIEH) and 317-365 (DEFC…CETV). 2 Chromo domains span residues 401–458 (LKPP…PPEF) and 489–550 (MQIH…NEDI). The region spanning 614 to 798 (RHCWSNGTDA…FHLLNFLSKE (185 aa)) is the Helicase ATP-binding domain. 627 to 634 (DEMGLGKT) lines the ATP pocket. Residues 749–752 (DEAH) carry the DEAH box motif. The 164-residue stretch at 930–1093 (LLQKMLRKLK…GKTMSKTELD (164 aa)) folds into the Helicase C-terminal domain. 4 disordered regions span residues 1168-1198 (ASYQ…EPDP), 1234-1289 (SENM…MPPL), 1415-1495 (AANG…ARPS), and 1745-1829 (NGER…PMET). Residues 1177–1186 (GQEEEEEEET) are compositionally biased toward acidic residues. Polar residues-rich tracts occupy residues 1234-1247 (SENM…QNQT) and 1418-1427 (GSAQGSSRST). The span at 1429-1444 (KPKEEPKEEPMEKEDA) shows a compositional bias: basic and acidic residues. Residues 1446-1455 (ETVNGATSEP) show a composition bias toward polar residues. The span at 1474–1490 (DEAKEPKEEPIETEKPR) shows a compositional bias: basic and acidic residues. Residues 1749–1773 (MEEDEPVEAEEEEGVKQEPDDETQD) are compositionally biased toward acidic residues. Residues 1792–1811 (DVPSTSAAAAVSSETAADAE) show a composition bias toward low complexity. A compositionally biased stretch (acidic residues) spans 1819 to 1829 (APTDEPEPMET).

In terms of assembly, component of the MEC (MEP-1-containing complex) complex that contains let-418, mep-1 and hda-1. Component of a NURD complex that contains let-418, hda-1, lin-40 and lin-53. Interacts with lin-1. Interacts with pie-1. Interacts with akir-1. As to expression, expressed in embryos and larva.

The protein resides in the nucleus. Its function is as follows. Part of a NuRD (Nucleosome Remodeling and Deacetylase) complex which is implicated in the synMuv B pathway that negatively regulates specification of vulval cell fate. This negative regulation is thought to be mediated via interaction with the promoter of lin-39, a key regulator in vulva development, and is dependent on the presence lin-1. Contributes to negative regulation of lag-2 which is expressed in the gut during larval development. Has a broad role in development. In association with akir-1, plays a role in regulating the transcription of antimicrobial peptide genes in response to fungal infection. The polypeptide is Protein let-418 (Caenorhabditis elegans).